Consider the following 860-residue polypeptide: DNA mismatch repair protein MutS (860 aa).

607 to 614 (GPNMSGKS) is a binding site for ATP.

It belongs to the DNA mismatch repair MutS family.

This protein is involved in the repair of mismatches in DNA. It is possible that it carries out the mismatch recognition step. This protein has a weak ATPase activity. The polypeptide is DNA mismatch repair protein MutS (Listeria innocua serovar 6a (strain ATCC BAA-680 / CLIP 11262)).